The following is a 291-amino-acid chain: Putative carboxymethylenebutenolidase (291 aa).

Residues 1 to 40 (MTAFDADLRSLAAQTTLSRRTVIATSLATGFALAVQPVAA) form the signal peptide. Catalysis depends on residues Cys170, Asp227, and His259.

This sequence belongs to the dienelactone hydrolase family.

It catalyses the reaction 2-(5-oxo-2,5-dihydrofuran-2-ylidene)acetate + H2O = 4-oxohex-2-enedioate + H(+). The chain is Putative carboxymethylenebutenolidase from Methylorubrum extorquens (strain ATCC 14718 / DSM 1338 / JCM 2805 / NCIMB 9133 / AM1) (Methylobacterium extorquens).